Reading from the N-terminus, the 199-residue chain is Recombination protein RecR (199 aa).

Residues 57-72 (CERCNNLSEAPLCAVC) form a C4-type zinc finger. Positions 80 to 174 (SILCVVESPA…TISRIARGVP (95 aa)) constitute a Toprim domain.

This sequence belongs to the RecR family.

May play a role in DNA repair. It seems to be involved in an RecBC-independent recombinational process of DNA repair. It may act with RecF and RecO. The polypeptide is Recombination protein RecR (Acidithiobacillus ferrooxidans (strain ATCC 23270 / DSM 14882 / CIP 104768 / NCIMB 8455) (Ferrobacillus ferrooxidans (strain ATCC 23270))).